A 73-amino-acid chain; its full sequence is U-scoloptoxin(15)-Sa1a (73 aa).

The N-terminal stretch at 1–20 (MKFHIIFCLLAALMMTSAFA) is a signal peptide.

The protein belongs to the scoloptoxin-15 family. Post-translationally, contains 2 disulfide bonds. In terms of tissue distribution, expressed by the venom gland.

It is found in the secreted. The chain is U-scoloptoxin(15)-Sa1a from Scolopendra alternans (Florida Keys giant centipede).